We begin with the raw amino-acid sequence, 456 residues long: RuvB-like helicase 1 (456 aa).

70–77 contributes to the ATP binding site; that stretch reads GPPGTGKT.

Belongs to the RuvB family. As to quaternary structure, forms homohexameric rings. May form a dodecamer with rept made of two stacked hexameric rings. Component of the chromatin remodeling Ino80 complex. Interacts with Myc and rept. Higher expression occurs in primordia of mesoderm, anterior and posterior midgut and cephalic furrow early in gastrulation, as well as in endoderm and mesoderm lineages during germ band extension. Later in development expression is only maintained in endoderm cells. Expressed in thoracic and abdominal segment neural precursors of all embryonic chordotonal organs.

It is found in the nucleus. It catalyses the reaction ATP + H2O = ADP + phosphate + H(+). Acts as a transcriptional coactivator in Wg signaling caused by altered arm signaling. Pont and rept interfere antagonistically with nuclear arm signaling function, and are required to enhance or reduce arm activity, respectively. Also an essential cofactor for the normal function of Myc; required for cellular proliferation and growth. In terms of biological role, proposed core component of the chromatin remodeling Ino80 complex which is involved in transcriptional regulation, DNA replication and probably DNA repair. This Drosophila melanogaster (Fruit fly) protein is RuvB-like helicase 1.